The primary structure comprises 137 residues: Large ribosomal subunit protein uL16 (137 aa).

It belongs to the universal ribosomal protein uL16 family. Part of the 50S ribosomal subunit.

In terms of biological role, binds 23S rRNA and is also seen to make contacts with the A and possibly P site tRNAs. In Streptococcus uberis (strain ATCC BAA-854 / 0140J), this protein is Large ribosomal subunit protein uL16.